The primary structure comprises 927 residues: Probable RNA-dependent RNA polymerase 4 (927 aa).

The segment at 98–135 (GESPVQFPRTPGKKSCRASQAEVSLDREDPSPKFLRGD) is disordered. The span at 121–135 (SLDREDPSPKFLRGD) shows a compositional bias: basic and acidic residues.

Belongs to the RdRP family.

The enzyme catalyses RNA(n) + a ribonucleoside 5'-triphosphate = RNA(n+1) + diphosphate. Functionally, probably involved in the RNA silencing pathway and required for the generation of small interfering RNAs (siRNAs). This is Probable RNA-dependent RNA polymerase 4 (RDR4) from Arabidopsis thaliana (Mouse-ear cress).